Reading from the N-terminus, the 360-residue chain is MSELHKAFLRRIKEQETALGLSGLVDEDDIPEPAVMPPTGNSSSTANTEDETILRDYKQFKETNFIQEFYENELGHKFKTYYKPSKKPGSILFCHHGAGSSSMTFGNLVNHIEDESVGIFLFDTRGHGESVATSDFSLDTLVQDVSFVLEQFSSKHQQTSIFLLGHSLGGAVLAKYSTLYPSDILKGLILLDIVEEAAVQSLNAMPSFIARRPLSFPSLSKAISWHMNFLLFNEKSARLSVPDLFTDKLTWITDLNATQPYWQTWFSGLSENFLGFKGPKLLMLSTHESLDKQLMIGQMQGKYQLVVFKNNEKSGHFVHEDLPNHVAVCLTDYIKRAVAPEIFMKEDLGVVPKWGGKINK.

The segment at 26-50 is disordered; it reads DEDDIPEPAVMPPTGNSSSTANTED. Residues Ser-167, Asp-192, and His-316 contribute to the active site.

The protein belongs to the AB hydrolase superfamily.

The catalysed reaction is [phosphatase 2A protein]-C-terminal L-leucine methyl ester + H2O = [phosphatase 2A protein]-C-terminal L-leucine + methanol + H(+). Functionally, demethylates proteins that have been reversibly carboxymethylated. Demethylates the phosphatase PP2A catalytic subunit. Involved in the regulation of filamentous growth. This is Protein phosphatase methylesterase 1 (PPE1) from Candida albicans (strain SC5314 / ATCC MYA-2876) (Yeast).